Here is a 447-residue protein sequence, read N- to C-terminus: Imidazolonepropionase (447 aa).

Positions 85 and 87 each coordinate Fe(3+). 2 residues coordinate Zn(2+): His85 and His87. 4-imidazolone-5-propanoate-binding residues include Arg94, Tyr157, and His190. Tyr157 is an N-formimidoyl-L-glutamate binding site. Residue His255 coordinates Fe(3+). His255 contributes to the Zn(2+) binding site. Residue Glu258 coordinates 4-imidazolone-5-propanoate. Residue Asp329 participates in Fe(3+) binding. Position 329 (Asp329) interacts with Zn(2+). N-formimidoyl-L-glutamate is bound by residues Asn331 and Gly333. Ser334 is a binding site for 4-imidazolone-5-propanoate.

The protein belongs to the metallo-dependent hydrolases superfamily. HutI family. Zn(2+) is required as a cofactor. It depends on Fe(3+) as a cofactor.

The protein localises to the cytoplasm. It catalyses the reaction 4-imidazolone-5-propanoate + H2O = N-formimidoyl-L-glutamate. It participates in amino-acid degradation; L-histidine degradation into L-glutamate; N-formimidoyl-L-glutamate from L-histidine: step 3/3. Catalyzes the hydrolytic cleavage of the carbon-nitrogen bond in imidazolone-5-propanoate to yield N-formimidoyl-L-glutamate. It is the third step in the universal histidine degradation pathway. This Shouchella clausii (strain KSM-K16) (Alkalihalobacillus clausii) protein is Imidazolonepropionase.